The primary structure comprises 259 residues: Deoxyribose-phosphate aldolase (259 aa).

The Proton donor/acceptor role is filled by D101. K166 serves as the catalytic Schiff-base intermediate with acetaldehyde. The active-site Proton donor/acceptor is the K200.

This sequence belongs to the DeoC/FbaB aldolase family. DeoC type 2 subfamily.

The protein localises to the cytoplasm. It catalyses the reaction 2-deoxy-D-ribose 5-phosphate = D-glyceraldehyde 3-phosphate + acetaldehyde. It functions in the pathway carbohydrate degradation; 2-deoxy-D-ribose 1-phosphate degradation; D-glyceraldehyde 3-phosphate and acetaldehyde from 2-deoxy-alpha-D-ribose 1-phosphate: step 2/2. Catalyzes a reversible aldol reaction between acetaldehyde and D-glyceraldehyde 3-phosphate to generate 2-deoxy-D-ribose 5-phosphate. In Glaesserella parasuis serovar 5 (strain SH0165) (Haemophilus parasuis), this protein is Deoxyribose-phosphate aldolase.